A 236-amino-acid polypeptide reads, in one-letter code: Rho-related GTP-binding protein RhoV (236 aa).

The interval 1–28 (MPPRELSEAEPPPLPASTPPPRRRSAPP) is disordered. Pro residues predominate over residues 10-20 (EPPPLPASTPP). At S25 the chain carries Phosphoserine. GTP-binding positions include 38–45 (GDGAVGKS), 85–89 (DTAGQ), and 143–146 (TQAD). Residue C234 is the site of S-palmitoyl cysteine attachment.

It belongs to the small GTPase superfamily. Rho family. As to quaternary structure, interacts with PAK2. The cofactor is Mg(2+). In terms of tissue distribution, highly expressed in brain and testis and at lower levels in spleen and lung.

The protein localises to the cell membrane. Its subcellular location is the endosome membrane. In terms of biological role, plays a role in the control of the actin cytoskeleton via activation of the JNK pathway. This Rattus norvegicus (Rat) protein is Rho-related GTP-binding protein RhoV.